We begin with the raw amino-acid sequence, 74 residues long: Protein krueppel (74 aa).

4 C2H2-type zinc fingers span residues 1–4 (ERTH), 10–32 (FECP…MRLH), 38–60 (YHCS…LRVH), and 66–74 (YTCEICDGK).

It belongs to the krueppel C2H2-type zinc-finger protein family.

It localises to the nucleus. Its function is as follows. Krueppel is a gap class segmentation protein. The polypeptide is Protein krueppel (Kr) (Musca domestica (House fly)).